The sequence spans 336 residues: F-box protein At5g50450 (336 aa).

An F-box domain is found at 19–70; that stretch reads NNHFEDLHDDLIISILRKLATSASSPSDFLTVLSTCKRLNRLGLHPLVLSKA. 8 residues coordinate Zn(2+): histidine 263, cysteine 266, cysteine 279, cysteine 282, cysteine 288, cysteine 292, histidine 301, and cysteine 305. Residues 263-305 form an MYND-type; atypical zinc finger; it reads HGGCGRPETRAHEFRRCSVCGKVNYCSRGCQALDWRAKHKVEC.

The chain is F-box protein At5g50450 from Arabidopsis thaliana (Mouse-ear cress).